Consider the following 651-residue polypeptide: Endoplasmic reticulum chaperone BiP (651 aa).

Positions Met-1 to Cys-20 are cleaved as a signal peptide. Residues Gly-36 to Tyr-39, Lys-96, Gly-226 to Thr-228, Glu-292 to Ser-299, and Gly-363 to Arg-366 each bind ATP. The nucleotide-binding (NBD) stretch occupies residues Lys-125–Lys-279. The tract at residues Val-399–Thr-499 is substrate-binding (SBD). The Prevents secretion from ER signature appears at Lys-648–Leu-651.

It belongs to the heat shock protein 70 family.

It is found in the endoplasmic reticulum lumen. The catalysed reaction is ATP + H2O = ADP + phosphate + H(+). With respect to regulation, the chaperone activity is regulated by ATP-induced allosteric coupling of the nucleotide-binding (NBD) and substrate-binding (SBD) domains. In the ADP-bound and nucleotide-free (apo) states, the two domains have little interaction. In contrast, in the ATP-bound state the two domains are tightly coupled, which results in drastically accelerated kinetics in both binding and release of polypeptide substrates. J domain-containing co-chaperones stimulate the ATPase activity and are required for efficient substrate recognition. Endoplasmic reticulum chaperone that plays a key role in protein folding and quality control in the endoplasmic reticulum lumen. Involved in the correct folding of proteins and degradation of misfolded proteins. Acts as a key repressor of the unfolded protein response (UPR). This Echinococcus granulosus (Hydatid tapeworm) protein is Endoplasmic reticulum chaperone BiP.